A 116-amino-acid chain; its full sequence is Small ribosomal subunit protein bS16 (116 aa).

Residues 88–116 form a disordered region; sequence RNNPKAAVPGKRMAELAKKKAERAAASAE. The span at 99–110 shows a compositional bias: basic and acidic residues; the sequence is RMAELAKKKAER.

It belongs to the bacterial ribosomal protein bS16 family.

The chain is Small ribosomal subunit protein bS16 from Cereibacter sphaeroides (strain ATCC 17025 / ATH 2.4.3) (Rhodobacter sphaeroides).